Here is a 634-residue protein sequence, read N- to C-terminus: Beta-ketoacyl-[acyl-carrier-protein] synthase FabY (634 aa).

A Ketosynthase family 3 (KS3) domain is found at 78 to 546 (ERIFASTLVR…GNNASGVVLS (469 aa)). Active-site for beta-ketoacyl synthase activity residues include Cys-281, His-434, and His-472.

The protein belongs to the thiolase-like superfamily. Beta-ketoacyl-ACP synthases family. As to quaternary structure, homodimer.

The catalysed reaction is malonyl-[ACP] + acetyl-CoA + H(+) = 3-oxobutanoyl-[ACP] + CO2 + CoA. It functions in the pathway lipid metabolism; fatty acid biosynthesis. Functionally, involved in the initiation of the fatty acid biosynthesis. Catalyzes the condensation of acetyl coenzyme A (acetyl-CoA) with malonyl-acyl carrier protein (ACP) to make the fatty acid synthesis (FAS) primer beta-acetoacetyl-ACP. It can also use short-chain acyl-CoA as substrates, including butyryl-CoA, and hexanoyl-CoA, but does not use any of the longer chain acyl-CoA substrates. The polypeptide is Beta-ketoacyl-[acyl-carrier-protein] synthase FabY (fabY) (Pseudomonas aeruginosa (strain ATCC 15692 / DSM 22644 / CIP 104116 / JCM 14847 / LMG 12228 / 1C / PRS 101 / PAO1)).